The following is a 419-amino-acid chain: Gamma-glutamyl phosphate reductase (419 aa).

It belongs to the gamma-glutamyl phosphate reductase family.

It is found in the cytoplasm. The enzyme catalyses L-glutamate 5-semialdehyde + phosphate + NADP(+) = L-glutamyl 5-phosphate + NADPH + H(+). The protein operates within amino-acid biosynthesis; L-proline biosynthesis; L-glutamate 5-semialdehyde from L-glutamate: step 2/2. In terms of biological role, catalyzes the NADPH-dependent reduction of L-glutamate 5-phosphate into L-glutamate 5-semialdehyde and phosphate. The product spontaneously undergoes cyclization to form 1-pyrroline-5-carboxylate. The polypeptide is Gamma-glutamyl phosphate reductase (Yersinia pestis).